The following is a 502-amino-acid chain: Maturase K (502 aa).

Belongs to the intron maturase 2 family. MatK subfamily.

The protein localises to the plastid. It is found in the chloroplast. In terms of biological role, usually encoded in the trnK tRNA gene intron. Probably assists in splicing its own and other chloroplast group II introns. This Vaccinium vitis-idaea (Mountain cranberry) protein is Maturase K.